The primary structure comprises 170 residues: MRRIFLIGYMGAGKTTIGKILAEKLNLSFIDTDFFIKNRYKKEITDIFAGEGEEKFRRIEQKILQEIIQKWENIVISTGGGTPCFFHNMELMNASGTTVYLKATIELLTERLINMKCARPLIKDKSPEEIKYFVINNLVKRELFYNQASIVFFIKKMTMNDIIENLMPKI.

ATP is bound at residue glycine 11–threonine 16. Position 15 (threonine 15) interacts with Mg(2+). Substrate is bound by residues aspartate 33, arginine 57, and glycine 80. Residue arginine 119 coordinates ATP. Arginine 141 contacts substrate.

Belongs to the shikimate kinase family. Monomer. Mg(2+) is required as a cofactor.

Its subcellular location is the cytoplasm. The catalysed reaction is shikimate + ATP = 3-phosphoshikimate + ADP + H(+). The protein operates within metabolic intermediate biosynthesis; chorismate biosynthesis; chorismate from D-erythrose 4-phosphate and phosphoenolpyruvate: step 5/7. Functionally, catalyzes the specific phosphorylation of the 3-hydroxyl group of shikimic acid using ATP as a cosubstrate. This Azobacteroides pseudotrichonymphae genomovar. CFP2 protein is Shikimate kinase.